The following is a 611-amino-acid chain: Leukotriene A-4 hydrolase (611 aa).

N6-acetyllysine is present on lysine 73. Residues 135–137 (QCQ) and 267–272 (PYGGME) contribute to the a peptide site. Residue histidine 296 coordinates Zn(2+). The active-site Proton acceptor is glutamate 297. Zn(2+)-binding residues include histidine 300 and glutamate 319. The residue at position 337 (lysine 337) is an N6-acetyllysine. The active-site Proton donor is the tyrosine 384. Serine 416 bears the Phosphoserine mark. Residue 564-566 (RMK) participates in a peptide binding. Residue lysine 573 is modified to N6-acetyllysine.

Belongs to the peptidase M1 family. It depends on Zn(2+) as a cofactor. In terms of processing, phosphorylation at Ser-416 inhibits enzymatic activity.

Its subcellular location is the cytoplasm. The catalysed reaction is leukotriene A4 + H2O = leukotriene B4. It participates in lipid metabolism; leukotriene B4 biosynthesis. Its activity is regulated as follows. Inhibited by bestatin. Subject to suicide inhibition by leukotriene A4. In terms of biological role, epoxide hydrolase that catalyzes the final step in the biosynthesis of the pro-inflammatory mediator leukotriene B4. Also has aminopeptidase activity. The protein is Leukotriene A-4 hydrolase (LTA4H) of Chinchilla lanigera (Long-tailed chinchilla).